Reading from the N-terminus, the 137-residue chain is MLQPKRTKFRKVHTGRNRGLAQSGNKVSFGTFGLKATDRGRMTARQIEAGRRAMTRHVKRQGKIWIRVFPDKPITKKPLEVRMGKGKGNVEYWVAQIQPGRVLYEMDGVPEELAREAFRLAARKLPFKTTFVTRTVM.

A compositionally biased stretch (basic residues) spans 1-16 (MLQPKRTKFRKVHTGR). Positions 1 to 22 (MLQPKRTKFRKVHTGRNRGLAQ) are disordered.

The protein belongs to the universal ribosomal protein uL16 family. Part of the 50S ribosomal subunit.

Binds 23S rRNA and is also seen to make contacts with the A and possibly P site tRNAs. In Idiomarina loihiensis (strain ATCC BAA-735 / DSM 15497 / L2-TR), this protein is Large ribosomal subunit protein uL16.